The following is a 432-amino-acid chain: Anaerobic glycerol-3-phosphate dehydrogenase subunit B (432 aa).

The protein belongs to the anaerobic G-3-P dehydrogenase subunit B family. As to quaternary structure, composed of a catalytic GlpA/B dimer and of membrane bound GlpC. The cofactor is FMN.

It carries out the reaction a quinone + sn-glycerol 3-phosphate = dihydroxyacetone phosphate + a quinol. The protein operates within polyol metabolism; glycerol degradation via glycerol kinase pathway; glycerone phosphate from sn-glycerol 3-phosphate (anaerobic route): step 1/1. Conversion of glycerol 3-phosphate to dihydroxyacetone. Uses fumarate or nitrate as electron acceptor. The polypeptide is Anaerobic glycerol-3-phosphate dehydrogenase subunit B (Histophilus somni (strain 129Pt) (Haemophilus somnus)).